A 451-amino-acid polypeptide reads, in one-letter code: UPF0210 protein lmo0534 (451 aa).

Belongs to the UPF0210 family. Homodimer.

The sequence is that of UPF0210 protein lmo0534 from Listeria monocytogenes serovar 1/2a (strain ATCC BAA-679 / EGD-e).